The following is a 688-amino-acid chain: Methionine--tRNA ligase (688 aa).

The short motif at 15-25 is the 'HIGH' region element; it reads PYANGPIHLGH. The Zn(2+) site is built by Cys146, Cys149, Cys159, and Cys162. The 'KMSKS' region motif lies at 332-336; it reads KMSKS. Residue Lys335 coordinates ATP. The segment at 552-576 is disordered; the sequence is AEAPKKADSKKATDTPVDTRPPLES. Residues 554-564 show a composition bias toward basic and acidic residues; sequence APKKADSKKAT. The tRNA-binding domain maps to 587–688; that stretch reads DFAKIDLRIA…EGAQPGMRVK (102 aa).

This sequence belongs to the class-I aminoacyl-tRNA synthetase family. MetG type 1 subfamily. Homodimer. It depends on Zn(2+) as a cofactor.

Its subcellular location is the cytoplasm. It catalyses the reaction tRNA(Met) + L-methionine + ATP = L-methionyl-tRNA(Met) + AMP + diphosphate. In terms of biological role, is required not only for elongation of protein synthesis but also for the initiation of all mRNA translation through initiator tRNA(fMet) aminoacylation. The polypeptide is Methionine--tRNA ligase (Shewanella woodyi (strain ATCC 51908 / MS32)).